The following is a 252-amino-acid chain: Phosphate import ATP-binding protein PstB 1 (252 aa).

The 242-residue stretch at 6 to 247 (LQVSDLSVYY…PKHKETEDYI (242 aa)) folds into the ABC transporter domain. 38–45 (GPSGSGKS) contributes to the ATP binding site.

The protein belongs to the ABC transporter superfamily. Phosphate importer (TC 3.A.1.7) family. In terms of assembly, the complex is composed of two ATP-binding proteins (PstB), two transmembrane proteins (PstC and PstA) and a solute-binding protein (PstS).

The protein localises to the cell membrane. It carries out the reaction phosphate(out) + ATP + H2O = ADP + 2 phosphate(in) + H(+). Functionally, part of the ABC transporter complex PstSACB involved in phosphate import. Responsible for energy coupling to the transport system. This is Phosphate import ATP-binding protein PstB 1 from Streptococcus agalactiae serotype Ia (strain ATCC 27591 / A909 / CDC SS700).